Here is a 416-residue protein sequence, read N- to C-terminus: UDP-N-acetylmuramoylalanine--D-glutamate ligase (416 aa).

104–110 provides a ligand contact to ATP; it reads GSNGKST.

This sequence belongs to the MurCDEF family.

Its subcellular location is the cytoplasm. It carries out the reaction UDP-N-acetyl-alpha-D-muramoyl-L-alanine + D-glutamate + ATP = UDP-N-acetyl-alpha-D-muramoyl-L-alanyl-D-glutamate + ADP + phosphate + H(+). The protein operates within cell wall biogenesis; peptidoglycan biosynthesis. Its function is as follows. Cell wall formation. Catalyzes the addition of glutamate to the nucleotide precursor UDP-N-acetylmuramoyl-L-alanine (UMA). This chain is UDP-N-acetylmuramoylalanine--D-glutamate ligase, found in Francisella tularensis subsp. tularensis (strain WY96-3418).